We begin with the raw amino-acid sequence, 116 residues long: Ribonuclease P protein component (116 aa).

This sequence belongs to the RnpA family. In terms of assembly, consists of a catalytic RNA component (M1 or rnpB) and a protein subunit.

The enzyme catalyses Endonucleolytic cleavage of RNA, removing 5'-extranucleotides from tRNA precursor.. RNaseP catalyzes the removal of the 5'-leader sequence from pre-tRNA to produce the mature 5'-terminus. It can also cleave other RNA substrates such as 4.5S RNA. The protein component plays an auxiliary but essential role in vivo by binding to the 5'-leader sequence and broadening the substrate specificity of the ribozyme. The polypeptide is Ribonuclease P protein component (Thermoanaerobacter pseudethanolicus (strain ATCC 33223 / 39E) (Clostridium thermohydrosulfuricum)).